The chain runs to 456 residues: Chromosomal replication initiator protein DnaA (456 aa).

Positions 1-83 (MTASLWQQCL…LRFDIGNRPH (83 aa)) are domain I, interacts with DnaA modulators. Residues 83–119 (HPVAVARAPARGADPVNNSQKSWESKAEAKPEPNHKS) are domain II. Positions 92–122 (ARGADPVNNSQKSWESKAEAKPEPNHKSNTN) are disordered. Residues 105–117 (WESKAEAKPEPNH) are compositionally biased toward basic and acidic residues. Positions 120 to 336 (NTNVNYTFEN…GALNRVIANA (217 aa)) are domain III, AAA+ region. Residues glycine 164, glycine 166, lysine 167, and threonine 168 each coordinate ATP. The interval 337–456 (NFTGRAINID…YSNLIRTLSS (120 aa)) is domain IV, binds dsDNA.

The protein belongs to the DnaA family. In terms of assembly, oligomerizes as a right-handed, spiral filament on DNA at oriC.

It localises to the cytoplasm. Functionally, plays an essential role in the initiation and regulation of chromosomal replication. ATP-DnaA binds to the origin of replication (oriC) to initiate formation of the DNA replication initiation complex once per cell cycle. Binds the DnaA box (a 9 base pair repeat at the origin) and separates the double-stranded (ds)DNA. Forms a right-handed helical filament on oriC DNA; dsDNA binds to the exterior of the filament while single-stranded (ss)DNA is stabiized in the filament's interior. The ATP-DnaA-oriC complex binds and stabilizes one strand of the AT-rich DNA unwinding element (DUE), permitting loading of DNA polymerase. After initiation quickly degrades to an ADP-DnaA complex that is not apt for DNA replication. Binds acidic phospholipids. The protein is Chromosomal replication initiator protein DnaA of Aeromonas hydrophila subsp. hydrophila (strain ATCC 7966 / DSM 30187 / BCRC 13018 / CCUG 14551 / JCM 1027 / KCTC 2358 / NCIMB 9240 / NCTC 8049).